A 143-amino-acid chain; its full sequence is FIS1-related protein fis-1 (143 aa).

The chain crosses the membrane as a helical span at residues 121–141; the sequence is LGLLGGAVAVVGGLVIAGLAF.

This sequence belongs to the FIS1 family.

The protein resides in the mitochondrion outer membrane. It is found in the peroxisome membrane. Its function is as follows. Involved in the fragmentation of the mitochondrial network. Involved in perinuclear clustering of the mitochondrial network. Plays a role in removal of ultraviolet C radiation-induced mitochondrial DNA damage. May act, redundantly with fis-2, downstream of mitochondrial fission, before the fission products participate in either mitochondrial homeostasis, mitophagy, or apoptosis. The polypeptide is FIS1-related protein fis-1 (Caenorhabditis elegans).